Consider the following 613-residue polypeptide: Dihydroxy-acid dehydratase (613 aa).

Asp-81 is a binding site for Mg(2+). [2Fe-2S] cluster is bound at residue Cys-122. Mg(2+) contacts are provided by Asp-123 and Lys-124. Position 124 is an N6-carboxylysine (Lys-124). Cys-197 contacts [2Fe-2S] cluster. Glu-493 lines the Mg(2+) pocket. The active-site Proton acceptor is the Ser-519.

The protein belongs to the IlvD/Edd family. As to quaternary structure, homodimer. [2Fe-2S] cluster serves as cofactor. Requires Mg(2+) as cofactor.

The enzyme catalyses (2R)-2,3-dihydroxy-3-methylbutanoate = 3-methyl-2-oxobutanoate + H2O. The catalysed reaction is (2R,3R)-2,3-dihydroxy-3-methylpentanoate = (S)-3-methyl-2-oxopentanoate + H2O. It participates in amino-acid biosynthesis; L-isoleucine biosynthesis; L-isoleucine from 2-oxobutanoate: step 3/4. It functions in the pathway amino-acid biosynthesis; L-valine biosynthesis; L-valine from pyruvate: step 3/4. Its function is as follows. Functions in the biosynthesis of branched-chain amino acids. Catalyzes the dehydration of (2R,3R)-2,3-dihydroxy-3-methylpentanoate (2,3-dihydroxy-3-methylvalerate) into 2-oxo-3-methylpentanoate (2-oxo-3-methylvalerate) and of (2R)-2,3-dihydroxy-3-methylbutanoate (2,3-dihydroxyisovalerate) into 2-oxo-3-methylbutanoate (2-oxoisovalerate), the penultimate precursor to L-isoleucine and L-valine, respectively. The protein is Dihydroxy-acid dehydratase of Corynebacterium glutamicum (strain R).